A 556-amino-acid chain; its full sequence is Urocanate hydratase (556 aa).

NAD(+) contacts are provided by residues 52 to 53, glutamine 130, 176 to 178, glutamate 196, arginine 201, 242 to 243, 263 to 267, 273 to 274, and tyrosine 322; these read GG, GMG, NA, QTSAH, and YL. Cysteine 410 is an active-site residue. Glycine 492 lines the NAD(+) pocket.

The protein belongs to the urocanase family. NAD(+) serves as cofactor.

It is found in the cytoplasm. The catalysed reaction is 4-imidazolone-5-propanoate = trans-urocanate + H2O. It participates in amino-acid degradation; L-histidine degradation into L-glutamate; N-formimidoyl-L-glutamate from L-histidine: step 2/3. In terms of biological role, catalyzes the conversion of urocanate to 4-imidazolone-5-propionate. The sequence is that of Urocanate hydratase from Acidiphilium cryptum (strain JF-5).